Consider the following 174-residue polypeptide: Early nodulin-11 (174 aa).

The first 25 residues, 1-25, serve as a signal peptide directing secretion; it reads MASFFLYSLGLVFLSALTLVPLGLA. Positions 28 to 174 are disordered; that stretch reads SPSHNMPPNP…GNQPPPSIHF (147 aa). Positions 53–65 are enriched in pro residues; the sequence is YNPPIYKPPPTYK. A compositionally biased stretch (low complexity) spans 70–83; that stretch reads KQPINKSPNKKPLL. The span at 122–132 shows a compositional bias: basic residues; that stretch reads PQKKPPSRKRP. Pro residues-rich tracts occupy residues 134-150 and 159-174; these read NTPPNKKPPLPKPPVNK and KRPPPYGNQPPPSIHF.

This sequence belongs to the plant proline-rich protein superfamily. As to expression, expressed in cotyledons, leaf vasculature, stomatal guard cells and trichomes. In the embryo, expressed in embryo suspensors, the epidermis and underlying tissues of the cotyledons, hypocotyls, and radicle in maturing embryos, and the outer cell layer of the endosperm.

The protein localises to the secreted. Its subcellular location is the cell wall. In terms of biological role, involved in the infection process during the plant-rhizobium interaction. Involved in actinorhizal root nodulation. Involved in symbiotic association with the nitrogen-fixing actinomycete Frankia spp. In Medicago truncatula (Barrel medic), this protein is Early nodulin-11.